Reading from the N-terminus, the 645-residue chain is DNA ligase (645 aa).

Residues Asp-30–Asp-34 and Ser-72–Gln-73 contribute to the NAD(+) site. Residue Lys-99 is the N6-AMP-lysine intermediate of the active site. The NAD(+) site is built by Arg-120, Glu-163, Lys-275, and Lys-296. Zn(2+)-binding residues include Cys-387, Cys-390, Cys-403, and Cys-408. The region spanning Glu-564–Val-645 is the BRCT domain.

The protein belongs to the NAD-dependent DNA ligase family. LigA subfamily. Mg(2+) is required as a cofactor. It depends on Mn(2+) as a cofactor.

The catalysed reaction is NAD(+) + (deoxyribonucleotide)n-3'-hydroxyl + 5'-phospho-(deoxyribonucleotide)m = (deoxyribonucleotide)n+m + AMP + beta-nicotinamide D-nucleotide.. DNA ligase that catalyzes the formation of phosphodiester linkages between 5'-phosphoryl and 3'-hydroxyl groups in double-stranded DNA using NAD as a coenzyme and as the energy source for the reaction. It is essential for DNA replication and repair of damaged DNA. This chain is DNA ligase, found in Treponema denticola (strain ATCC 35405 / DSM 14222 / CIP 103919 / JCM 8153 / KCTC 15104).